Consider the following 825-residue polypeptide: Phenylalanine--tRNA ligase beta subunit (825 aa).

Residues 39-154 (RSWAEGVVLG…KAHPLGSDAR (116 aa)) form the tRNA-binding domain. The region spanning 411–506 (PLERTLKLRL…RLYGYDRFSE (96 aa)) is the B5 domain. Mg(2+)-binding residues include Asp484, Asp490, Glu493, and Glu494. The FDX-ACB domain occupies 731-824 (SPFPASDRDI…LEKHFPVTLR (94 aa)).

Belongs to the phenylalanyl-tRNA synthetase beta subunit family. Type 1 subfamily. As to quaternary structure, tetramer of two alpha and two beta subunits. Mg(2+) is required as a cofactor.

Its subcellular location is the cytoplasm. It carries out the reaction tRNA(Phe) + L-phenylalanine + ATP = L-phenylalanyl-tRNA(Phe) + AMP + diphosphate + H(+). This is Phenylalanine--tRNA ligase beta subunit from Synechococcus sp. (strain JA-3-3Ab) (Cyanobacteria bacterium Yellowstone A-Prime).